We begin with the raw amino-acid sequence, 270 residues long: Phosphatidylinositol transfer protein alpha isoform (270 aa).

Positions 58, 60, 85, 89, 96, and 194 each coordinate a 1,2-diacyl-sn-glycero-3-phospho-(1D-myo-inositol). An N6-acetyllysine modification is found at Lys215. Over residues 250 to 263 (TKRQLDEMRQKDPV) the composition is skewed to basic and acidic residues. The segment at 250-270 (TKRQLDEMRQKDPVKGMTADD) is disordered.

This sequence belongs to the PtdIns transfer protein family. PI transfer class I subfamily.

Its subcellular location is the cytoplasm. It localises to the nucleus. It catalyses the reaction a 1,2-diacyl-sn-glycero-3-phosphocholine(in) = a 1,2-diacyl-sn-glycero-3-phosphocholine(out). The enzyme catalyses a 1,2-diacyl-sn-glycero-3-phospho-(1D-myo-inositol)(in) = a 1,2-diacyl-sn-glycero-3-phospho-(1D-myo-inositol)(out). With respect to regulation, phosphatidylinositol transfer activity is inhibited by N-ethylmaleimide. Its function is as follows. Catalyzes the transfer of phosphatidylinositol (PI) and phosphatidylcholine (PC) between membranes. Shows a preference for PI and PC containing shorter saturated or monosaturated acyl chains at the sn-1 and sn-2 positions. Preference order for PC is C16:1 &gt; C16:0 &gt; C18:1 &gt; C18:0 &gt; C20:4 and for PI is C16:1 &gt; C16:0 &gt; C18:1 &gt; C18:0 &gt; C20:4 &gt; C20:3. The sequence is that of Phosphatidylinositol transfer protein alpha isoform (PITPNA) from Homo sapiens (Human).